A 498-amino-acid polypeptide reads, in one-letter code: Guanosine-5'-triphosphate,3'-diphosphate pyrophosphatase (498 aa).

It belongs to the GppA/Ppx family. GppA subfamily.

It carries out the reaction guanosine 3'-diphosphate 5'-triphosphate + H2O = guanosine 3',5'-bis(diphosphate) + phosphate + H(+). It functions in the pathway purine metabolism; ppGpp biosynthesis; ppGpp from GTP: step 2/2. In terms of biological role, catalyzes the conversion of pppGpp to ppGpp. Guanosine pentaphosphate (pppGpp) is a cytoplasmic signaling molecule which together with ppGpp controls the 'stringent response', an adaptive process that allows bacteria to respond to amino acid starvation, resulting in the coordinated regulation of numerous cellular activities. The polypeptide is Guanosine-5'-triphosphate,3'-diphosphate pyrophosphatase (Yersinia enterocolitica serotype O:8 / biotype 1B (strain NCTC 13174 / 8081)).